Consider the following 220-residue polypeptide: Probable nicotinate-nucleotide adenylyltransferase (220 aa).

This sequence belongs to the NadD family.

It catalyses the reaction nicotinate beta-D-ribonucleotide + ATP + H(+) = deamido-NAD(+) + diphosphate. It functions in the pathway cofactor biosynthesis; NAD(+) biosynthesis; deamido-NAD(+) from nicotinate D-ribonucleotide: step 1/1. Functionally, catalyzes the reversible adenylation of nicotinate mononucleotide (NaMN) to nicotinic acid adenine dinucleotide (NaAD). In Yersinia pseudotuberculosis serotype O:1b (strain IP 31758), this protein is Probable nicotinate-nucleotide adenylyltransferase.